The primary structure comprises 244 residues: 23S rRNA (guanosine-2'-O-)-methyltransferase RlmB (244 aa).

The S-adenosyl-L-methionine site is built by Gly-196, Ile-216, and Leu-225.

It belongs to the class IV-like SAM-binding methyltransferase superfamily. RNA methyltransferase TrmH family. RlmB subfamily. As to quaternary structure, homodimer.

It localises to the cytoplasm. It carries out the reaction guanosine(2251) in 23S rRNA + S-adenosyl-L-methionine = 2'-O-methylguanosine(2251) in 23S rRNA + S-adenosyl-L-homocysteine + H(+). Its function is as follows. Specifically methylates the ribose of guanosine 2251 in 23S rRNA. The protein is 23S rRNA (guanosine-2'-O-)-methyltransferase RlmB of Pectobacterium atrosepticum (strain SCRI 1043 / ATCC BAA-672) (Erwinia carotovora subsp. atroseptica).